We begin with the raw amino-acid sequence, 607 residues long: Chaperone protein dnaK (607 aa).

Residues 579–591 (KASETSNAKTNGK) show a composition bias toward polar residues. A disordered region spans residues 579–607 (KASETSNAKTNGKASEKEDVIDADFKAQE). A compositionally biased stretch (basic and acidic residues) spans 592 to 607 (ASEKEDVIDADFKAQE).

The protein belongs to the heat shock protein 70 family.

The protein resides in the plastid. It localises to the chloroplast. Its function is as follows. Acts as a chaperone. In Cyanidioschyzon merolae (strain NIES-3377 / 10D) (Unicellular red alga), this protein is Chaperone protein dnaK.